The following is a 352-amino-acid chain: Enhancer of mRNA-decapping protein 1 (352 aa).

2 disordered regions span residues 1 to 258 and 277 to 352; these read MMAH…PRNH and QYPQ…SSKS. The segment covering 71-80 has biased composition (low complexity); it reads HTSSNTSNNK. Polar residues-rich tracts occupy residues 93–104 and 205–225; these read NFGNESSHQNGG and TEPNYHVNPQVNTPPQHSVNV. The segment covering 289–309 has biased composition (low complexity); it reads GGVYPMVAPQYQQQPQQHPQQ.

It belongs to the EDC family.

It localises to the cytoplasm. Its function is as follows. mRNA-binding protein which stimulates mRNA decapping. The protein is Enhancer of mRNA-decapping protein 1 (EDC1) of Debaryomyces hansenii (strain ATCC 36239 / CBS 767 / BCRC 21394 / JCM 1990 / NBRC 0083 / IGC 2968) (Yeast).